We begin with the raw amino-acid sequence, 456 residues long: 26S proteasome non-ATPase regulatory subunit 12 (456 aa).

Alanine 2 is modified (N-acetylalanine). Residue lysine 92 forms a Glycyl lysine isopeptide (Lys-Gly) (interchain with G-Cter in SUMO1); alternate linkage. A Glycyl lysine isopeptide (Lys-Gly) (interchain with G-Cter in SUMO2); alternate cross-link involves residue lysine 92. Lysine 221 and lysine 368 each carry N6-acetyllysine. The region spanning 242–420 (SICKHYRAIY…GIINFQRPKD (179 aa)) is the PCI domain.

Belongs to the proteasome subunit p55 family. In terms of assembly, component of the 19S proteasome regulatory particle complex. The 26S proteasome consists of a 20S core particle (CP) and two 19S regulatory subunits (RP). The regulatory particle is made of a lid composed of 9 subunits including PSMD12, a base containing 6 ATPases and few additional components. Interacts with ERCC6.

In terms of biological role, component of the 26S proteasome, a multiprotein complex involved in the ATP-dependent degradation of ubiquitinated proteins. This complex plays a key role in the maintenance of protein homeostasis by removing misfolded or damaged proteins, which could impair cellular functions, and by removing proteins whose functions are no longer required. Therefore, the proteasome participates in numerous cellular processes, including cell cycle progression, apoptosis, or DNA damage repair. This Homo sapiens (Human) protein is 26S proteasome non-ATPase regulatory subunit 12 (PSMD12).